We begin with the raw amino-acid sequence, 219 residues long: Neurotrophic factor BDNF precursor form (219 aa).

The N-terminal stretch at S1–A5 is a signal peptide. Residues A6–R114 constitute a propeptide that is removed on maturation. A glycan (N-linked (GlcNAc...) asparagine) is linked at N107. A disulfide bond links C127 and C194.

This sequence belongs to the NGF-beta family.

Its subcellular location is the secreted. Functionally, promotes the survival of neuronal populations that are all located either in the central nervous system or directly connected to it. This Loxocemus bicolor (Mexican burrowing python) protein is Neurotrophic factor BDNF precursor form (BDNF).